The chain runs to 383 residues: Chitinase-3-like protein 1 (383 aa).

Residues 1–21 form the signal peptide; that stretch reads MGLRVAQTGFVVLVLLQSCAA. The GH18 domain occupies 22 to 383; sequence YKLICYYTSW…NAIKDVLAGV (362 aa). The cysteines at positions 26 and 51 are disulfide-linked. N-linked (GlcNAc...) asparagine glycosylation is present at asparagine 60. Residues 70–71, 97–100, tyrosine 141, 204–207, and lysine 263 contribute to the chitin site; these read EW, GGWN, and LTYD. Cysteine 300 and cysteine 364 are joined by a disulfide. An important for AKT1 activation and IL8 production region spans residues 324-338; the sequence is QWVAYDDQESVKNKA. Tryptophan 352 contributes to the chitin binding site.

The protein belongs to the glycosyl hydrolase 18 family. As to quaternary structure, monomer. In terms of tissue distribution, detected in mammary gland.

The protein resides in the secreted. Its subcellular location is the extracellular space. The protein localises to the cytoplasm. It localises to the perinuclear region. It is found in the endoplasmic reticulum. Functionally, carbohydrate-binding lectin with a preference for chitin. Has no chitinase activity. May play a role in tissue remodeling and in the capacity of cells to respond to and cope with changes in their environment. Plays a role in T-helper cell type 2 (Th2) inflammatory response and IL-13-induced inflammation, regulating allergen sensitization, inflammatory cell apoptosis, dendritic cell accumulation and M2 macrophage differentiation. Facilitates invasion of pathogenic enteric bacteria into colonic mucosa and lymphoid organs. Mediates activation of AKT1 signaling pathway and subsequent IL8 production in colonic epithelial cells. Regulates antibacterial responses in lung by contributing to macrophage bacterial killing, controlling bacterial dissemination and augmenting host tolerance. Also regulates hyperoxia-induced injury, inflammation and epithelial apoptosis in lung. This chain is Chitinase-3-like protein 1 (CHI3L1), found in Bubalus bubalis (Domestic water buffalo).